The following is a 375-amino-acid chain: Protein MGF 360-5L (375 aa).

Belongs to the asfivirus MGF 360 family.

Plays a role in virus cell tropism, and may be required for efficient virus replication in macrophages. The sequence is that of Protein MGF 360-5L from African swine fever virus (isolate Portugal/Lis 57/1957) (ASFV).